The primary structure comprises 641 residues: Mannosyl-oligosaccharide 1,2-alpha-mannosidase IB (641 aa).

The residue at position 2 (Thr-2) is an N-acetylthreonine. Residues 2 to 36 are Cytoplasmic-facing; it reads TTPALLPLSGRRIPPLNLGPPSFPHHRATLRLSEK. Residues 37–57 traverse the membrane as a helical; Signal-anchor for type II membrane protein segment; sequence FILLLILSAFITLCFGAFFFL. Over 58–641 the chain is Lumenal; that stretch reads PDSSKHKRFD…STLSGNPAVR (584 aa). An intrachain disulfide couples Cys-462 to Cys-494. Glu-508 functions as the Proton donor in the catalytic mechanism. Thr-619 lines the Ca(2+) pocket. Residue Asn-631 is glycosylated (N-linked (GlcNAc...) asparagine).

This sequence belongs to the glycosyl hydrolase 47 family. The cofactor is Ca(2+).

The protein resides in the golgi apparatus membrane. It catalyses the reaction N(4)-(alpha-D-Man-(1-&gt;2)-alpha-D-Man-(1-&gt;2)-alpha-D-Man-(1-&gt;3)-[alpha-D-Man-(1-&gt;2)-alpha-D-Man-(1-&gt;3)-[alpha-D-Man-(1-&gt;2)-alpha-D-Man-(1-&gt;6)]-alpha-D-Man-(1-&gt;6)]-beta-D-Man-(1-&gt;4)-beta-D-GlcNAc-(1-&gt;4)-beta-D-GlcNAc)-L-asparaginyl-[protein] (N-glucan mannose isomer 9A1,2,3B1,2,3) + 4 H2O = N(4)-(alpha-D-Man-(1-&gt;3)-[alpha-D-Man-(1-&gt;3)-[alpha-D-Man-(1-&gt;6)]-alpha-D-Man-(1-&gt;6)]-beta-D-Man-(1-&gt;4)-beta-D-GlcNAc-(1-&gt;4)-beta-D-GlcNAc)-L-asparaginyl-[protein] (N-glucan mannose isomer 5A1,2) + 4 beta-D-mannose. The enzyme catalyses N(4)-(alpha-D-Man-(1-&gt;2)-alpha-D-Man-(1-&gt;2)-alpha-D-Man-(1-&gt;3)-[alpha-D-Man-(1-&gt;3)-[alpha-D-Man-(1-&gt;2)-alpha-D-Man-(1-&gt;6)]-alpha-D-Man-(1-&gt;6)]-beta-D-Man-(1-&gt;4)-beta-D-GlcNAc-(1-&gt;4)-beta-D-GlcNAc)-L-asparaginyl-[protein] (N-glucan mannose isomer 8A1,2,3B1,3) + 3 H2O = N(4)-(alpha-D-Man-(1-&gt;3)-[alpha-D-Man-(1-&gt;3)-[alpha-D-Man-(1-&gt;6)]-alpha-D-Man-(1-&gt;6)]-beta-D-Man-(1-&gt;4)-beta-D-GlcNAc-(1-&gt;4)-beta-D-GlcNAc)-L-asparaginyl-[protein] (N-glucan mannose isomer 5A1,2) + 3 beta-D-mannose. The protein operates within protein modification; protein glycosylation. With respect to regulation, inhibited by both 1-deoxymannojirimycin and kifunensine. Involved in the maturation of Asn-linked oligosaccharides. Progressively trim alpha-1,2-linked mannose residues from Man(9)GlcNAc(2) to produce Man(5)GlcNAc(2). The sequence is that of Mannosyl-oligosaccharide 1,2-alpha-mannosidase IB (Man1a2) from Mus musculus (Mouse).